The sequence spans 617 residues: Probable Xaa-Pro aminopeptidase P (617 aa).

Residues Asp-414, Asp-425, Glu-523, and Glu-537 each contribute to the Mn(2+) site.

It belongs to the peptidase M24B family. Mn(2+) is required as a cofactor.

It carries out the reaction Release of any N-terminal amino acid, including proline, that is linked to proline, even from a dipeptide or tripeptide.. In terms of biological role, catalyzes the removal of a penultimate prolyl residue from the N-termini of peptides. The protein is Probable Xaa-Pro aminopeptidase P (AMPP) of Ajellomyces dermatitidis (strain ER-3 / ATCC MYA-2586) (Blastomyces dermatitidis).